A 312-amino-acid chain; its full sequence is Probable deoxyhypusine synthase (312 aa).

K285 functions as the Nucleophile in the catalytic mechanism.

This sequence belongs to the deoxyhypusine synthase family. It depends on NAD(+) as a cofactor.

It catalyses the reaction [eIF5A protein]-L-lysine + spermidine = [eIF5A protein]-deoxyhypusine + propane-1,3-diamine. Its pathway is protein modification; eIF5A hypusination. Its function is as follows. Catalyzes the NAD-dependent oxidative cleavage of spermidine and the subsequent transfer of the butylamine moiety of spermidine to the epsilon-amino group of a specific lysine residue of the eIF-5A precursor protein to form the intermediate deoxyhypusine residue. This is Probable deoxyhypusine synthase (dys) from Saccharolobus solfataricus (strain ATCC 35092 / DSM 1617 / JCM 11322 / P2) (Sulfolobus solfataricus).